Reading from the N-terminus, the 363-residue chain is Transcription factor IIIA (363 aa).

C2H2-type zinc fingers lie at residues Phe38–His62, Phe68–His92, Phe98–His123, Tyr130–His154, Phe160–His184, Tyr187–His211, Val215–His237, Tyr244–His269, and Phe275–His299. The tract at residues Pro301–His363 is disordered. Positions Ser338–Glu350 are enriched in low complexity.

Its subcellular location is the nucleus. In terms of biological role, involved in ribosomal large subunit biogenesis. Binds the approximately 50 base pairs internal control region (ICR) of 5S ribosomal RNA genes. It is required for their RNA polymerase III-dependent transcription and may also maintain the transcription of other genes. Also binds the transcribed 5S RNA's. The protein is Transcription factor IIIA (Gtf3a) of Rattus norvegicus (Rat).